A 650-amino-acid polypeptide reads, in one-letter code: Glycoprotein 105 (650 aa).

Residues 1–32 form a helical; Signal-anchor for type II membrane protein membrane-spanning segment; it reads MATARLGVMRPPRSCALIFLCAFSMATAPTNA. Topologically, residues 33 to 650 are virion surface; sequence TAHRRAGTVK…RFPHVGIGSY (618 aa). N-linked (GlcNAc...) asparagine; by host glycosylation is found at Asn52, Asn290, Asn332, Asn338, Asn359, Asn422, Asn516, and Asn552.

As to quaternary structure, associates with the gp82-gp105 complex. In terms of processing, N-Glycosylated.

Its subcellular location is the virion membrane. In Homo sapiens (Human), this protein is Glycoprotein 105 (U96/U97/U98/U99/U100).